The sequence spans 286 residues: Beta-lactamase TEM-12 (286 aa).

The first 23 residues, 1–23 (MSIQHFRVALIPFFAAFCLPVFA), serve as a signal peptide directing secretion. Catalysis depends on Ser-68, which acts as the Acyl-ester intermediate. A disulfide bridge links Cys-75 with Cys-121. Glu-166 serves as the catalytic Proton acceptor. A substrate-binding site is contributed by 232-234 (KSG).

The protein belongs to the class-A beta-lactamase family.

It catalyses the reaction a beta-lactam + H2O = a substituted beta-amino acid. Functionally, TEM-type are the most prevalent beta-lactamases in enterobacteria; they hydrolyze the beta-lactam bond in susceptible beta-lactam antibiotics, thus conferring resistance to penicillins and cephalosporins such as ceftazidime. This Klebsiella oxytoca protein is Beta-lactamase TEM-12 (blaT-12b).